The following is a 166-amino-acid chain: Phosphopantetheine adenylyltransferase (166 aa).

Ser-11 lines the substrate pocket. Residues 11–12 (SF) and His-19 each bind ATP. Residues Lys-43, Ala-76, and Arg-90 each contribute to the substrate site. Residues 91–93 (GLR), Glu-101, and 126–132 (LQPVSSS) contribute to the ATP site.

It belongs to the bacterial CoaD family. Homohexamer. Mg(2+) is required as a cofactor.

The protein resides in the cytoplasm. The catalysed reaction is (R)-4'-phosphopantetheine + ATP + H(+) = 3'-dephospho-CoA + diphosphate. It participates in cofactor biosynthesis; coenzyme A biosynthesis; CoA from (R)-pantothenate: step 4/5. Functionally, reversibly transfers an adenylyl group from ATP to 4'-phosphopantetheine, yielding dephospho-CoA (dPCoA) and pyrophosphate. This Streptococcus equi subsp. equi (strain 4047) protein is Phosphopantetheine adenylyltransferase.